We begin with the raw amino-acid sequence, 698 residues long: Polyribonucleotide nucleotidyltransferase (698 aa).

Mg(2+)-binding residues include D490 and D496. Residues 557-616 (PKVVTMTIKPDKIRDVIGPGGKKINEIIDETGVKLDIEQDGTIFIGAVDQAMINRAREII) form the KH domain. One can recognise an S1 motif domain in the interval 626–694 (GQTYQATVKR…KQGRVNASHR (69 aa)).

The protein belongs to the polyribonucleotide nucleotidyltransferase family. Mg(2+) serves as cofactor.

Its subcellular location is the cytoplasm. It carries out the reaction RNA(n+1) + phosphate = RNA(n) + a ribonucleoside 5'-diphosphate. Involved in mRNA degradation. Catalyzes the phosphorolysis of single-stranded polyribonucleotides processively in the 3'- to 5'-direction. This chain is Polyribonucleotide nucleotidyltransferase, found in Staphylococcus aureus (strain MRSA252).